The primary structure comprises 121 residues: MARIAGINIPPHQHAEIGLTAIYGIGRTTARKICEAAGIAYSKKIKELTDGDLEKIRDQLTSLTLEGDLRRETTMNIKRLMDIGCYRGFRHRRGLPMRGQRTRTNARTRKGPRKGAAALKK.

The interval 94 to 121 (GLPMRGQRTRTNARTRKGPRKGAAALKK) is disordered.

It belongs to the universal ribosomal protein uS13 family. In terms of assembly, part of the 30S ribosomal subunit. Forms a loose heterodimer with protein S19. Forms two bridges to the 50S subunit in the 70S ribosome.

Located at the top of the head of the 30S subunit, it contacts several helices of the 16S rRNA. In the 70S ribosome it contacts the 23S rRNA (bridge B1a) and protein L5 of the 50S subunit (bridge B1b), connecting the 2 subunits; these bridges are implicated in subunit movement. Contacts the tRNAs in the A and P-sites. This Delftia acidovorans (strain DSM 14801 / SPH-1) protein is Small ribosomal subunit protein uS13.